We begin with the raw amino-acid sequence, 177 residues long: Large ribosomal subunit protein uL6 (177 aa).

This sequence belongs to the universal ribosomal protein uL6 family. As to quaternary structure, part of the 50S ribosomal subunit.

Its function is as follows. This protein binds to the 23S rRNA, and is important in its secondary structure. It is located near the subunit interface in the base of the L7/L12 stalk, and near the tRNA binding site of the peptidyltransferase center. This chain is Large ribosomal subunit protein uL6, found in Psychrobacter arcticus (strain DSM 17307 / VKM B-2377 / 273-4).